A 185-amino-acid chain; its full sequence is Elongation factor P (185 aa).

The protein belongs to the elongation factor P family.

Its subcellular location is the cytoplasm. It participates in protein biosynthesis; polypeptide chain elongation. Its function is as follows. Involved in peptide bond synthesis. Stimulates efficient translation and peptide-bond synthesis on native or reconstituted 70S ribosomes in vitro. Probably functions indirectly by altering the affinity of the ribosome for aminoacyl-tRNA, thus increasing their reactivity as acceptors for peptidyl transferase. This is Elongation factor P from Deinococcus deserti (strain DSM 17065 / CIP 109153 / LMG 22923 / VCD115).